A 97-amino-acid chain; its full sequence is Cobalt transport protein CbiN (97 aa).

The next 2 helical transmembrane spans lie at 6–26 (VLMI…YSGL) and 68–88 (SLLF…FFGY).

Belongs to the CbiN family. In terms of assembly, forms an energy-coupling factor (ECF) transporter complex composed of an ATP-binding protein (A component, CbiO), a transmembrane protein (T component, CbiQ) and 2 possible substrate-capture proteins (S components, CbiM and CbiN) of unknown stoichimetry.

It is found in the cell membrane. The protein operates within cofactor biosynthesis; adenosylcobalamin biosynthesis. Functionally, part of the energy-coupling factor (ECF) transporter complex CbiMNOQ involved in cobalt import. The chain is Cobalt transport protein CbiN from Methanococcus maripaludis (strain C6 / ATCC BAA-1332).